The following is a 623-amino-acid chain: Aspartate--tRNA(Asp/Asn) ligase (623 aa).

Glu-175 provides a ligand contact to L-aspartate. The aspartate stretch occupies residues Gln-199 to Lys-202. L-aspartate-binding residues include Arg-221 and His-483. Arg-221–Glu-223 serves as a coordination point for ATP. Glu-517 is a binding site for ATP. L-aspartate is bound at residue Arg-524. Gly-569 to Arg-572 provides a ligand contact to ATP.

This sequence belongs to the class-II aminoacyl-tRNA synthetase family. Type 1 subfamily. In terms of assembly, homodimer.

Its subcellular location is the cytoplasm. The catalysed reaction is tRNA(Asx) + L-aspartate + ATP = L-aspartyl-tRNA(Asx) + AMP + diphosphate. Functionally, aspartyl-tRNA synthetase with relaxed tRNA specificity since it is able to aspartylate not only its cognate tRNA(Asp) but also tRNA(Asn). Reaction proceeds in two steps: L-aspartate is first activated by ATP to form Asp-AMP and then transferred to the acceptor end of tRNA(Asp/Asn). The polypeptide is Aspartate--tRNA(Asp/Asn) ligase (Xanthobacter autotrophicus (strain ATCC BAA-1158 / Py2)).